The primary structure comprises 347 residues: Microneme protein 21 (347 aa).

The protein resides in the cytoplasmic vesicle. Its subcellular location is the secretory vesicle. It is found in the microneme. The protein localises to the secreted. The polypeptide is Microneme protein 21 (Toxoplasma gondii).